A 182-amino-acid chain; its full sequence is uncharacterized protein (182 aa).

Belongs to the mimivirus L6/L7/L57 family.

This is an uncharacterized protein from Acanthamoeba polyphaga mimivirus (APMV).